A 106-amino-acid polypeptide reads, in one-letter code: UPF0145 protein FTL_1249 (106 aa).

It belongs to the UPF0145 family.

This is UPF0145 protein FTL_1249 from Francisella tularensis subsp. holarctica (strain LVS).